The following is a 236-amino-acid chain: Ubiquinone biosynthesis O-methyltransferase (236 aa).

Residues R40, G59, D80, and L124 each contribute to the S-adenosyl-L-methionine site.

The protein belongs to the methyltransferase superfamily. UbiG/COQ3 family.

The catalysed reaction is a 3-demethylubiquinol + S-adenosyl-L-methionine = a ubiquinol + S-adenosyl-L-homocysteine + H(+). The enzyme catalyses a 3-(all-trans-polyprenyl)benzene-1,2-diol + S-adenosyl-L-methionine = a 2-methoxy-6-(all-trans-polyprenyl)phenol + S-adenosyl-L-homocysteine + H(+). Its pathway is cofactor biosynthesis; ubiquinone biosynthesis. Functionally, O-methyltransferase that catalyzes the 2 O-methylation steps in the ubiquinone biosynthetic pathway. This Nitrosococcus oceani (strain ATCC 19707 / BCRC 17464 / JCM 30415 / NCIMB 11848 / C-107) protein is Ubiquinone biosynthesis O-methyltransferase.